Reading from the N-terminus, the 154-residue chain is MFGADKGTADKLDGKKLHIGIVQARFNENITNTLAAACRAELLRLGVQEKHIRHVLVPGALEVPVALQALAERDEYDALIALGCIIRGETYHFELVANESGAGVTRLALDYQVPIANAIITTENLDQALARQTEKGVDAARVAVEMANLLEELS.

5-amino-6-(D-ribitylamino)uracil contacts are provided by residues F26, 60–62 (ALE), and 84–86 (CII). (2S)-2-hydroxy-3-oxobutyl phosphate is bound at residue 89-90 (ET). H92 (proton donor) is an active-site residue. Position 117 (N117) interacts with 5-amino-6-(D-ribitylamino)uracil. R131 is a (2S)-2-hydroxy-3-oxobutyl phosphate binding site.

Belongs to the DMRL synthase family.

It catalyses the reaction (2S)-2-hydroxy-3-oxobutyl phosphate + 5-amino-6-(D-ribitylamino)uracil = 6,7-dimethyl-8-(1-D-ribityl)lumazine + phosphate + 2 H2O + H(+). Its pathway is cofactor biosynthesis; riboflavin biosynthesis; riboflavin from 2-hydroxy-3-oxobutyl phosphate and 5-amino-6-(D-ribitylamino)uracil: step 1/2. Functionally, catalyzes the formation of 6,7-dimethyl-8-ribityllumazine by condensation of 5-amino-6-(D-ribitylamino)uracil with 3,4-dihydroxy-2-butanone 4-phosphate. This is the penultimate step in the biosynthesis of riboflavin. This chain is 6,7-dimethyl-8-ribityllumazine synthase, found in Acidovorax ebreus (strain TPSY) (Diaphorobacter sp. (strain TPSY)).